Consider the following 106-residue polypeptide: uncharacterized protein (106 aa).

This is an uncharacterized protein from Rickettsia prowazekii (strain Madrid E).